An 80-amino-acid chain; its full sequence is Homeobox protein 7 (80 aa).

Positions 8–67 (SNIRNIRSSGISTKKLEDFFSINQYPNKNEIKDFANYYQCDETKIKNWFKGKRDRLKKKS) form a DNA-binding region, homeobox. The tract at residues 60–80 (RDRLKKKSSNNEKSGNKFYFK) is disordered. Over residues 70–80 (NEKSGNKFYFK) the composition is skewed to low complexity.

The protein resides in the nucleus. Its function is as follows. Putative transcription factor. The sequence is that of Homeobox protein 7 (hbx7) from Dictyostelium discoideum (Social amoeba).